Consider the following 766-residue polypeptide: Dolichyl pyrophosphate Glc1Man9GlcNAc2 alpha-1,3-glucosyltransferase (766 aa).

12 helical membrane passes run leucine 6 to valine 26, tyrosine 60 to phenylalanine 80, isoleucine 96 to alanine 116, serine 156 to isoleucine 176, isoleucine 190 to leucine 210, alanine 228 to histidine 248, proline 324 to isoleucine 344, alanine 350 to valine 370, isoleucine 395 to phenylalanine 415, isoleucine 423 to leucine 443, valine 452 to leucine 472, and leucine 482 to tryptophan 502.

It belongs to the ALG6/ALG8 glucosyltransferase family.

It localises to the endoplasmic reticulum membrane. The enzyme catalyses an alpha-D-Glc-(1-&gt;3)-alpha-D-Man-(1-&gt;2)-alpha-D-Man-(1-&gt;2)-alpha-D-Man-(1-&gt;3)-[alpha-D-Man-(1-&gt;2)-alpha-D-Man-(1-&gt;3)-[alpha-D-Man-(1-&gt;2)-alpha-D-Man-(1-&gt;6)]-alpha-D-Man-(1-&gt;6)]-beta-D-Man-(1-&gt;4)-beta-D-GlcNAc-(1-&gt;4)-alpha-D-GlcNAc-diphospho-di-trans,poly-cis-dolichol + a di-trans,poly-cis-dolichyl beta-D-glucosyl phosphate = an alpha-D-Glc-(1-&gt;3)-alpha-D-Glc-(1-&gt;3)-alpha-D-Man-(1-&gt;2)-alpha-D-Man-(1-&gt;2)-alpha-D-Man-(1-&gt;3)-[alpha-D-Man-(1-&gt;2)-alpha-D-Man-(1-&gt;3)-[alpha-D-Man-(1-&gt;2)-alpha-D-Man-(1-&gt;6)]-alpha-D-Man-(1-&gt;6)]-beta-D-Man-(1-&gt;4)-beta-D-GlcNAc-(1-&gt;4)-alpha-D-GlcNAc-diphospho-di-trans,poly-cis-dolichol + a di-trans,poly-cis-dolichyl phosphate + H(+). Its pathway is protein modification; protein glycosylation. Dolichyl pyrophosphate Glc1Man9GlcNAc2 alpha-1,3-glucosyltransferase that operates in the biosynthetic pathway of dolichol-linked oligosaccharides, the glycan precursors employed in protein asparagine (N)-glycosylation. The assembly of dolichol-linked oligosaccharides begins on the cytosolic side of the endoplasmic reticulum membrane and finishes in its lumen. The sequential addition of sugars to dolichol pyrophosphate produces dolichol-linked oligosaccharides containing fourteen sugars, including two GlcNAcs, nine mannoses and three glucoses. Once assembled, the oligosaccharide is transferred from the lipid to nascent proteins by oligosaccharyltransferases. In the lumen of the endoplasmic reticulum, adds the second glucose residue from dolichyl phosphate glucose (Dol-P-Glc) onto the lipid-linked oligosaccharide intermediate Glc(1)Man(9)GlcNAc(2)-PP-Dol to produce Glc(2)Man(9)GlcNAc(2)-PP-Dol. The polypeptide is Dolichyl pyrophosphate Glc1Man9GlcNAc2 alpha-1,3-glucosyltransferase (Caenorhabditis elegans).